We begin with the raw amino-acid sequence, 543 residues long: MSVDELNQSILQYKEQLEQIAQALQLTRDETERSELNKLKSDLIELLELTVESLAATSDDDDAPDTAGRAPPATADNPIDDEFALFMREIKELQTEDSAAGEQAGEQTATEPERQPNDDDADNDDDADDKLDLDGLVGSKCSAPHLHTWGSTAYHNAMVCSLDADDLAHATAKVLFTNPTHREMLPCAYFLEGECRFTDEKCRYSHGEVVRLDQLRDYRAPQFERLRRAGSRALVKQSTRLWCKGTVTEVDFDAKRCKVRLEEGKREQLEVPFEDLLPLDEDEDGQEAAEDSESDTDGADEEEADDEALRKALLVEKSLFHPAPDRRLGEWEEHTRGIGSKIMQKMGYIVGTGLGREGEGIVVPVSAQVLPQGRSLDYCMELREQSNGDKDLFSVEKKLVQLKRQEAKRAAKDYERQRARESKSKDVFSFINEQVFSGAAGGESSRPNRNRPGALSRQELKEHSCKNLNIASLKLSEEIRRTEADVERLKIALTRHRAGTPAADNLLRQIDAKRAEISRMQASEGNISREQQLRSDKKKLTIF.

2 disordered regions span residues 55-79 and 95-132; these read AATS…DNPI and TEDS…DKLD. A compositionally biased stretch (low complexity) spans 65-76; the sequence is DTAGRAPPATAD. The segment covering 118–131 has biased composition (acidic residues); sequence DDDADNDDDADDKL. The C3H1-type zinc finger occupies 186–209; that stretch reads PCAYFLEGECRFTDEKCRYSHGEV. A disordered region spans residues 272–304; that stretch reads PFEDLLPLDEDEDGQEAAEDSESDTDGADEEEA. The segment covering 277-304 has biased composition (acidic residues); it reads LPLDEDEDGQEAAEDSESDTDGADEEEA. Residues 335-381 enclose the G-patch domain; it reads TRGIGSKIMQKMGYIVGTGLGREGEGIVVPVSAQVLPQGRSLDYCME. Residues 438–460 form a disordered region; sequence GAAGGESSRPNRNRPGALSRQEL.

The protein resides in the nucleus. Its function is as follows. Transcription repressor. The chain is Zinc finger CCCH-type with G patch domain-containing protein from Anopheles gambiae (African malaria mosquito).